The following is a 126-amino-acid chain: Large ribosomal subunit protein bL20c (126 aa).

It belongs to the bacterial ribosomal protein bL20 family.

It is found in the plastid. Its subcellular location is the chloroplast. Binds directly to 23S ribosomal RNA and is necessary for the in vitro assembly process of the 50S ribosomal subunit. It is not involved in the protein synthesizing functions of that subunit. This is Large ribosomal subunit protein bL20c from Pelargonium hortorum (Common geranium).